A 91-amino-acid chain; its full sequence is Large ribosomal subunit protein bL27 (91 aa).

Positions 1–21 (MAHKKSGGSSRNGRDSAGRRL) are disordered.

The protein belongs to the bacterial ribosomal protein bL27 family.

The sequence is that of Large ribosomal subunit protein bL27 from Phenylobacterium zucineum (strain HLK1).